A 359-amino-acid polypeptide reads, in one-letter code: Photosystem II protein D1 1 (359 aa).

The next 3 helical transmembrane spans lie at 29 to 46, 118 to 133, and 142 to 156; these read YVGW…AATT, HFLI…EWEL, and WICI…AASA. H118 lines the chlorophyll a pocket. Y126 is a pheophytin a binding site. [CaMn4O5] cluster is bound by residues D170 and E189. A helical membrane pass occupies residues 197–218; sequence FHMLGVAGVFGGSLFSAMHGSL. H198 lines the chlorophyll a pocket. Residues H215 and 264-265 contribute to the a quinone site; that span reads SF. Residue H215 coordinates Fe cation. H272 provides a ligand contact to Fe cation. Residues 274-288 traverse the membrane as a helical segment; that stretch reads FLAAWPVVGIWFTAL. Residues H332, E333, D342, and A344 each coordinate [CaMn4O5] cluster. Residues 345–359 constitute a propeptide that is removed on maturation; it reads AAESAPVALQAPAIG.

It belongs to the reaction center PufL/M/PsbA/D family. In terms of assembly, PSII is composed of 1 copy each of membrane proteins PsbA, PsbB, PsbC, PsbD, PsbE, PsbF, PsbH, PsbI, PsbJ, PsbK, PsbL, PsbM, PsbT, PsbX, PsbY, PsbZ, Psb30/Ycf12, peripheral proteins PsbO, CyanoQ (PsbQ), PsbU, PsbV and a large number of cofactors. It forms dimeric complexes. It depends on The D1/D2 heterodimer binds P680, chlorophylls that are the primary electron donor of PSII, and subsequent electron acceptors. It shares a non-heme iron and each subunit binds pheophytin, quinone, additional chlorophylls, carotenoids and lipids. D1 provides most of the ligands for the Mn4-Ca-O5 cluster of the oxygen-evolving complex (OEC). There is also a Cl(-1) ion associated with D1 and D2, which is required for oxygen evolution. The PSII complex binds additional chlorophylls, carotenoids and specific lipids. as a cofactor. Tyr-161 forms a radical intermediate that is referred to as redox-active TyrZ, YZ or Y-Z. In terms of processing, C-terminally processed by CtpA; processing is essential to allow assembly of the oxygen-evolving complex and thus photosynthetic growth.

Its subcellular location is the cellular thylakoid membrane. It catalyses the reaction 2 a plastoquinone + 4 hnu + 2 H2O = 2 a plastoquinol + O2. Functionally, photosystem II (PSII) is a light-driven water:plastoquinone oxidoreductase that uses light energy to abstract electrons from H(2)O, generating O(2) and a proton gradient subsequently used for ATP formation. It consists of a core antenna complex that captures photons, and an electron transfer chain that converts photonic excitation into a charge separation. The D1/D2 (PsbA/PsbD) reaction center heterodimer binds P680, the primary electron donor of PSII as well as several subsequent electron acceptors. This chain is Photosystem II protein D1 1, found in Synechococcus sp. (strain RCC307).